The following is a 208-amino-acid chain: Protein-L-isoaspartate O-methyltransferase (208 aa).

S59 is an active-site residue.

It belongs to the methyltransferase superfamily. L-isoaspartyl/D-aspartyl protein methyltransferase family.

It localises to the cytoplasm. It carries out the reaction [protein]-L-isoaspartate + S-adenosyl-L-methionine = [protein]-L-isoaspartate alpha-methyl ester + S-adenosyl-L-homocysteine. Catalyzes the methyl esterification of L-isoaspartyl residues in peptides and proteins that result from spontaneous decomposition of normal L-aspartyl and L-asparaginyl residues. It plays a role in the repair and/or degradation of damaged proteins. The polypeptide is Protein-L-isoaspartate O-methyltransferase (Salmonella newport (strain SL254)).